We begin with the raw amino-acid sequence, 505 residues long: Monocarboxylate transporter 6 (505 aa).

Over 1–17 (MPQALERADGSWAWVVL) the chain is Cytoplasmic. Residues 18–38 (LATMVTQGLTLGFPTCIGIFF) form a helical membrane-spanning segment. Residues 39 to 53 (TELQWEFQASNSETS) are Extracellular-facing. The chain crosses the membrane as a helical span at residues 54-74 (WFPSILTAVLHMAGPLCSILV). The Cytoplasmic segment spans residues 75–80 (GRFGCR). A helical transmembrane segment spans residues 81–101 (VTVMLGGVLASLGMVASSFSH). At 102-110 (NLSQLYFTA) the chain is on the extracellular side. The helical transmembrane segment at 111 to 131 (GFITGLGMCFSFQSSITVLGF) threads the bilayer. Residues 132–137 (YFVRRR) are Cytoplasmic-facing. The chain crosses the membrane as a helical span at residues 138 to 158 (VLANALASMGVSLGITLWPLL). Residues 159–171 (SRYLLENLGWRGT) are Extracellular-facing. Residues 172 to 192 (FLVFGGIFLHCCICGAIIRPV) traverse the membrane as a helical segment. At 193-239 (ATSVAPETKECPPPPPETPALGCLAACGRTIQRHLAFDILRHNTGYC) the chain is on the cytoplasmic side. A helical transmembrane segment spans residues 240–260 (VYILGVMWSVLGFPLPQVFLV). At 261-274 (PYAMWHSVDEQQAA) the chain is on the extracellular side. Residues 275–295 (LLISIIGFSNIFLRPLAGLMA) form a helical membrane-spanning segment. The Cytoplasmic portion of the chain corresponds to 296-305 (GRPAFASHRK). A helical membrane pass occupies residues 306-326 (YLFSLALLLNGLTNLVCAASG). At 327–329 (DFW) the chain is on the extracellular side. A helical membrane pass occupies residues 330–350 (VLVGYCLAYSVSMSGIGALIF). Residues 351–367 (QVLMDIVPMDQFPRALG) are Cytoplasmic-facing. The chain crosses the membrane as a helical span at residues 368 to 388 (LFTVLDGLAFLISPPLAGLLL). Residues 389 to 396 (DATNNFSY) are Extracellular-facing. Residues 397-417 (VFYMSSFFLISAALFMGGSFY) traverse the membrane as a helical segment. Residues 418–505 (ALQKKEQGKQ…QTALGWNSPT (88 aa)) lie on the Cytoplasmic side of the membrane. The segment at 443–464 (KDGPGKQRSPEIMCQSSRQPRP) is disordered.

The protein belongs to the major facilitator superfamily. Monocarboxylate porter (TC 2.A.1.13) family. As to expression, highly expressed in kidney.

It is found in the cell membrane. Proton-linked monocarboxylate transporter. Catalyzes the rapid transport across the plasma membrane of many monocarboxylates such as lactate, pyruvate, branched-chain oxo acids derived from leucine, valine and isoleucine, and the ketone bodies acetoacetate, beta-hydroxybutyrate and acetate. This chain is Monocarboxylate transporter 6 (SLC16A5), found in Homo sapiens (Human).